The following is a 304-amino-acid chain: Acetyl-coenzyme A carboxylase carboxyl transferase subunit beta (304 aa).

A CoA carboxyltransferase N-terminal domain is found at 25-294 (LWIKCPETGE…KAIKRDTATE (270 aa)).

Belongs to the AccD/PCCB family. Acetyl-CoA carboxylase is a heterohexamer composed of biotin carboxyl carrier protein (AccB), biotin carboxylase (AccC) and two subunits each of ACCase subunit alpha (AccA) and ACCase subunit beta (AccD).

Its subcellular location is the cytoplasm. It catalyses the reaction N(6)-carboxybiotinyl-L-lysyl-[protein] + acetyl-CoA = N(6)-biotinyl-L-lysyl-[protein] + malonyl-CoA. It functions in the pathway lipid metabolism; malonyl-CoA biosynthesis; malonyl-CoA from acetyl-CoA: step 1/1. Functionally, component of the acetyl coenzyme A carboxylase (ACC) complex. Biotin carboxylase (BC) catalyzes the carboxylation of biotin on its carrier protein (BCCP) and then the CO(2) group is transferred by the transcarboxylase to acetyl-CoA to form malonyl-CoA. The sequence is that of Acetyl-coenzyme A carboxylase carboxyl transferase subunit beta from Sinorhizobium medicae (strain WSM419) (Ensifer medicae).